The following is a 141-amino-acid chain: Nucleoside triphosphatase NudI (141 aa).

In terms of domain architecture, Nudix hydrolase spans methionine 1–leucine 141. The Nudix box signature appears at glycine 38–glycine 59.

The protein belongs to the Nudix hydrolase family. NudI subfamily. Monomer. Mg(2+) serves as cofactor.

It catalyses the reaction a ribonucleoside 5'-triphosphate + H2O = a ribonucleoside 5'-phosphate + diphosphate + H(+). The catalysed reaction is a 2'-deoxyribonucleoside 5'-triphosphate + H2O = a 2'-deoxyribonucleoside 5'-phosphate + diphosphate + H(+). It carries out the reaction dUTP + H2O = dUMP + diphosphate + H(+). The enzyme catalyses dTTP + H2O = dTMP + diphosphate + H(+). It catalyses the reaction dCTP + H2O = dCMP + diphosphate + H(+). Functionally, catalyzes the hydrolysis of nucleoside triphosphates, with a preference for pyrimidine deoxynucleoside triphosphates (dUTP, dTTP and dCTP). The sequence is that of Nucleoside triphosphatase NudI from Escherichia coli O6:K15:H31 (strain 536 / UPEC).